Here is a 467-residue protein sequence, read N- to C-terminus: ATP synthase subunit beta (467 aa).

Residue Gly-152 to Thr-159 participates in ATP binding.

It belongs to the ATPase alpha/beta chains family. In terms of assembly, F-type ATPases have 2 components, CF(1) - the catalytic core - and CF(0) - the membrane proton channel. CF(1) has five subunits: alpha(3), beta(3), gamma(1), delta(1), epsilon(1). CF(0) has three main subunits: a(1), b(2) and c(9-12). The alpha and beta chains form an alternating ring which encloses part of the gamma chain. CF(1) is attached to CF(0) by a central stalk formed by the gamma and epsilon chains, while a peripheral stalk is formed by the delta and b chains.

It localises to the cell membrane. The catalysed reaction is ATP + H2O + 4 H(+)(in) = ADP + phosphate + 5 H(+)(out). Its function is as follows. Produces ATP from ADP in the presence of a proton gradient across the membrane. The catalytic sites are hosted primarily by the beta subunits. The polypeptide is ATP synthase subunit beta (Caldicellulosiruptor bescii (strain ATCC BAA-1888 / DSM 6725 / KCTC 15123 / Z-1320) (Anaerocellum thermophilum)).